Reading from the N-terminus, the 131-residue chain is MRHRYSNRKLNRTTSHRLAMLRNMANSLLKHEVIVTTLPKAKELRRVAEPLITLGKKPSLANRRLAFDRTRDREIVVKLFDVLGARYATRNGGYVRILKYGFRKGDNAPMALVELVDRPEDAVAVEDNSAE.

This sequence belongs to the bacterial ribosomal protein bL17 family. As to quaternary structure, part of the 50S ribosomal subunit. Contacts protein L32.

The polypeptide is Large ribosomal subunit protein bL17 (Chromobacterium violaceum (strain ATCC 12472 / DSM 30191 / JCM 1249 / CCUG 213 / NBRC 12614 / NCIMB 9131 / NCTC 9757 / MK)).